The sequence spans 370 residues: Actin-related protein 2/3 complex subunit 1A-A (370 aa).

WD repeat units follow at residues 6 to 45, 50 to 89, 140 to 179, 202 to 241, 244 to 284, and 322 to 365; these read FLLE…WVKG, EHNG…WKPT, PIRS…VDEK, SSGG…SVSQ, TEFL…TFVS, and LHQN…SYIQ.

Belongs to the WD repeat ARPC1 family. As to quaternary structure, component of the Arp2/3 complex.

It is found in the cytoplasm. The protein localises to the cytoskeleton. The protein resides in the nucleus. Functionally, probably functions as a component of the Arp2/3 complex which is involved in regulation of actin polymerization and together with an activating nucleation-promoting factor (NPF) mediates the formation of branched actin networks. In addition to its role in the cytoplasmic cytoskeleton, the Arp2/3 complex also promotes actin polymerization in the nucleus, thereby regulating gene transcription and repair of damaged DNA. The polypeptide is Actin-related protein 2/3 complex subunit 1A-A (arpc1a-a) (Xenopus laevis (African clawed frog)).